Consider the following 553-residue polypeptide: Dihydroxy-acid dehydratase (553 aa).

D78 lines the Mg(2+) pocket. Residue C119 coordinates [2Fe-2S] cluster. Mg(2+) is bound by residues D120 and K121. An N6-carboxylysine modification is found at K121. Residue C193 participates in [2Fe-2S] cluster binding. E441 contributes to the Mg(2+) binding site. The active-site Proton acceptor is S467.

Belongs to the IlvD/Edd family. As to quaternary structure, homodimer. The cofactor is [2Fe-2S] cluster. Requires Mg(2+) as cofactor.

The catalysed reaction is (2R)-2,3-dihydroxy-3-methylbutanoate = 3-methyl-2-oxobutanoate + H2O. The enzyme catalyses (2R,3R)-2,3-dihydroxy-3-methylpentanoate = (S)-3-methyl-2-oxopentanoate + H2O. It functions in the pathway amino-acid biosynthesis; L-isoleucine biosynthesis; L-isoleucine from 2-oxobutanoate: step 3/4. The protein operates within amino-acid biosynthesis; L-valine biosynthesis; L-valine from pyruvate: step 3/4. Functionally, functions in the biosynthesis of branched-chain amino acids. Catalyzes the dehydration of (2R,3R)-2,3-dihydroxy-3-methylpentanoate (2,3-dihydroxy-3-methylvalerate) into 2-oxo-3-methylpentanoate (2-oxo-3-methylvalerate) and of (2R)-2,3-dihydroxy-3-methylbutanoate (2,3-dihydroxyisovalerate) into 2-oxo-3-methylbutanoate (2-oxoisovalerate), the penultimate precursor to L-isoleucine and L-valine, respectively. The chain is Dihydroxy-acid dehydratase from Trichlorobacter lovleyi (strain ATCC BAA-1151 / DSM 17278 / SZ) (Geobacter lovleyi).